The chain runs to 76 residues: uncharacterized protein (76 aa).

Residues 1–22 (MFTKALSVVLLTCALFSGQLMA) form the signal peptide.

This is an uncharacterized protein from Escherichia coli O157:H7.